A 228-amino-acid chain; its full sequence is Ankyrin repeat domain-containing protein 46 (228 aa).

ANK repeat units follow at residues 11–40, 44–73, 77–103, and 107–138; these read QTNVPLLQACIDGDFNYSKRLLESGFDPNI, RGRTGLHLAAARGNVDICQLLHKFGADLLA, QGNTALHLCGHVDTIQFLVSNGLKIDI, and QGATPLVLAKRRGVNKDVIRLLESLEEQEVKG. Residues 195–215 form a helical membrane-spanning segment; that stretch reads VLLLIFVIALLSLGIAYYVSG.

The protein resides in the membrane. This Bos taurus (Bovine) protein is Ankyrin repeat domain-containing protein 46 (ANKRD46).